The following is a 199-amino-acid chain: Golgi to ER traffic protein 1 (199 aa).

The Lumenal segment spans residues Met1 to Ile11. The chain crosses the membrane as a helical span at residues Leu12–Ser31. Over Thr32 to Ile115 the chain is Cytoplasmic. Residues Tyr76–Leu116 adopt a coiled-coil conformation. A helical transmembrane segment spans residues Leu116 to Phe136. Over Tyr137–Ala160 the chain is Lumenal. Residues Val161–Phe177 traverse the membrane as a helical segment. At Ser178 to Glu199 the chain is on the cytoplasmic side.

The protein belongs to the WRB/GET1 family. As to quaternary structure, component of the Golgi to ER traffic (GET) complex, which is composed of GET1, GET2 and GET3. Within the complex, GET1 and GET2 form a heterotetramer which is stabilized by phosphatidylinositol binding and which binds to the GET3 homodimer.

It localises to the endoplasmic reticulum membrane. Its subcellular location is the golgi apparatus membrane. Required for the post-translational delivery of tail-anchored (TA) proteins to the endoplasmic reticulum. Together with GET2, acts as a membrane receptor for soluble GET3, which recognizes and selectively binds the transmembrane domain of TA proteins in the cytosol. The GET complex cooperates with the HDEL receptor ERD2 to mediate the ATP-dependent retrieval of resident ER proteins that contain a C-terminal H-D-E-L retention signal from the Golgi to the ER. The polypeptide is Golgi to ER traffic protein 1 (Candida albicans (strain SC5314 / ATCC MYA-2876) (Yeast)).